The following is a 150-amino-acid chain: UPF0178 protein Shewana3_1627 (150 aa).

The protein belongs to the UPF0178 family.

The sequence is that of UPF0178 protein Shewana3_1627 from Shewanella sp. (strain ANA-3).